The following is a 345-amino-acid chain: 4-hydroxy-3-methylbut-2-en-1-yl diphosphate synthase (flavodoxin) (345 aa).

Positions 271, 274, 306, and 313 each coordinate [4Fe-4S] cluster.

Belongs to the IspG family. It depends on [4Fe-4S] cluster as a cofactor.

It catalyses the reaction (2E)-4-hydroxy-3-methylbut-2-enyl diphosphate + oxidized [flavodoxin] + H2O + 2 H(+) = 2-C-methyl-D-erythritol 2,4-cyclic diphosphate + reduced [flavodoxin]. Its pathway is isoprenoid biosynthesis; isopentenyl diphosphate biosynthesis via DXP pathway; isopentenyl diphosphate from 1-deoxy-D-xylulose 5-phosphate: step 5/6. In terms of biological role, converts 2C-methyl-D-erythritol 2,4-cyclodiphosphate (ME-2,4cPP) into 1-hydroxy-2-methyl-2-(E)-butenyl 4-diphosphate. The sequence is that of 4-hydroxy-3-methylbut-2-en-1-yl diphosphate synthase (flavodoxin) from Haemophilus influenzae (strain PittEE).